Consider the following 628-residue polypeptide: Phosphomethylpyrimidine synthase (628 aa).

Over residues Met-1–Thr-14 the composition is skewed to polar residues. The tract at residues Met-1–Phe-37 is disordered. Residues Ser-19–Phe-37 show a composition bias toward basic and acidic residues. Substrate is bound by residues Asn-260, Met-289, Tyr-318, His-354, Ser-374–Gly-376, Asp-415–Arg-418, and Glu-454. His-458 is a Zn(2+) binding site. Tyr-481 lines the substrate pocket. His-522 provides a ligand contact to Zn(2+). Cys-602, Cys-605, and Cys-610 together coordinate [4Fe-4S] cluster.

It belongs to the ThiC family. Homodimer. Requires [4Fe-4S] cluster as cofactor.

It carries out the reaction 5-amino-1-(5-phospho-beta-D-ribosyl)imidazole + S-adenosyl-L-methionine = 4-amino-2-methyl-5-(phosphooxymethyl)pyrimidine + CO + 5'-deoxyadenosine + formate + L-methionine + 3 H(+). It participates in cofactor biosynthesis; thiamine diphosphate biosynthesis. Functionally, catalyzes the synthesis of the hydroxymethylpyrimidine phosphate (HMP-P) moiety of thiamine from aminoimidazole ribotide (AIR) in a radical S-adenosyl-L-methionine (SAM)-dependent reaction. This is Phosphomethylpyrimidine synthase from Psychrobacter cryohalolentis (strain ATCC BAA-1226 / DSM 17306 / VKM B-2378 / K5).